A 526-amino-acid polypeptide reads, in one-letter code: Inosine-5'-monophosphate dehydrogenase (526 aa).

CBS domains are found at residues 120-179 and 183-239; these read FIQD…EDPV and MATD…PLAS. NAD(+) contacts are provided by residues 276 to 278 and 326 to 328; these read DSS and GMG. K(+) is bound by residues glycine 328 and glycine 330. Serine 331 is a binding site for IMP. Cysteine 333 is a K(+) binding site. Catalysis depends on cysteine 333, which acts as the Thioimidate intermediate. Residues 366–368 and 389–390 each bind IMP; these read DGG and GS. The active-site Proton acceptor is the arginine 439. Position 451 (glutamine 451) interacts with IMP. Residue serine 506 coordinates K(+). The interval 506–526 is disordered; it reads SAQTEGNVHGLHTHEKKLYSS. Residues 517–526 show a composition bias toward basic and acidic residues; it reads HTHEKKLYSS.

The protein belongs to the IMPDH/GMPR family. Homotetramer. Requires K(+) as cofactor.

Its subcellular location is the cytoplasm. The catalysed reaction is IMP + NAD(+) + H2O = XMP + NADH + H(+). It participates in secondary metabolite biosynthesis; terpenoid biosynthesis. With respect to regulation, mycophenolic acid (MPA) is a non-competitive inhibitor that prevents formation of the closed enzyme conformation by binding to the same site as the amobile flap. In contrast, mizoribine monophosphate (MZP) is a competitive inhibitor that induces the closed conformation. MPA is a potent inhibitor of mammalian IMPDHs but a poor inhibitor of the bacterial enzymes. MZP is a more potent inhibitor of bacterial IMPDH. Functionally, catalyzes the conversion of inosine 5'-phosphate (IMP) to xanthosine 5'-phosphate (XMP), the first committed and rate-limiting step in the de novo synthesis of guanine nucleotides, and therefore plays an important role in the regulation of cell growth. Part of the gene cluster that mediates the biosynthesis of mycophenolic acid (MPA), the first isolated antibiotic natural product in the world. Does not play a role in the biosynthesis of MPA, but is involved in self resistance to MPA, since MPA acts as an inhibitor of IMP dehydrogenases. The chain is Inosine-5'-monophosphate dehydrogenase from Penicillium roqueforti (strain FM164).